The chain runs to 428 residues: tRNA(Ile)-lysidine synthase (428 aa).

An ATP-binding site is contributed by 28 to 33 (SGGVDS).

This sequence belongs to the tRNA(Ile)-lysidine synthase family.

Its subcellular location is the cytoplasm. It carries out the reaction cytidine(34) in tRNA(Ile2) + L-lysine + ATP = lysidine(34) in tRNA(Ile2) + AMP + diphosphate + H(+). Its function is as follows. Ligates lysine onto the cytidine present at position 34 of the AUA codon-specific tRNA(Ile) that contains the anticodon CAU, in an ATP-dependent manner. Cytidine is converted to lysidine, thus changing the amino acid specificity of the tRNA from methionine to isoleucine. This Streptococcus pyogenes serotype M18 (strain MGAS8232) protein is tRNA(Ile)-lysidine synthase.